Consider the following 129-residue polypeptide: Small ribosomal subunit protein uS11 (129 aa).

It belongs to the universal ribosomal protein uS11 family. In terms of assembly, part of the 30S ribosomal subunit. Interacts with proteins S7 and S18. Binds to IF-3.

Located on the platform of the 30S subunit, it bridges several disparate RNA helices of the 16S rRNA. Forms part of the Shine-Dalgarno cleft in the 70S ribosome. This chain is Small ribosomal subunit protein uS11, found in Yersinia pseudotuberculosis serotype O:1b (strain IP 31758).